The sequence spans 458 residues: Transcription factor ORF10 (458 aa).

A DNA-binding region (zn(2)-C6 fungal-type) is located at residues 38 to 65; it reads CESCRLKKLRCSGHKSGCDRCRSQAMKC. The segment at 69–109 is disordered; that stretch reads IGAPSNSSRPKSRSHFQPNFSNMSGTAGTSKAPSPLGNDGV. Residues 71 to 100 are compositionally biased toward polar residues; sequence APSNSSRPKSRSHFQPNFSNMSGTAGTSKA.

Its subcellular location is the nucleus. Its function is as follows. Transcription factor that specifically regulates the expression of the gene cluster that mediates the biosynthesis of PR-toxin, a bicyclic sesquiterpene belonging to the eremophilane class and acting as a mycotoxin. The chain is Transcription factor ORF10 from Penicillium roqueforti (strain FM164).